Consider the following 483-residue polypeptide: Sphingomyelin phosphodiesterase 5 (483 aa).

The segment at 1–20 (MSLPDISRRRSPVPQEDWPL) is disordered. A helical transmembrane segment spans residues 80-100 (VLLPLVVVGLPLALVGLALWL). Glu209 is a Mg(2+) binding site. Catalysis depends on His471, which acts as the Proton acceptor.

The protein belongs to the neutral sphingomyelinase family. Mg(2+) is required as a cofactor. The cofactor is Mn(2+). As to expression, highly expressed in testis, pancreas, epididymis, and brain.

It localises to the mitochondrion inner membrane. The protein localises to the endoplasmic reticulum membrane. The enzyme catalyses a sphingomyelin + H2O = phosphocholine + an N-acylsphing-4-enine + H(+). It carries out the reaction N-(hexadecanoyl)-sphing-4-enine-1-phosphocholine + H2O = N-hexadecanoylsphing-4-enine + phosphocholine + H(+). It functions in the pathway lipid metabolism; sphingolipid metabolism. Activated by anionic phospholipids, specially cardiolipin and phosphatidylserine. Its function is as follows. Catalyzes the hydrolysis of membrane sphingomyelin to form phosphorylcholine and ceramide. The chain is Sphingomyelin phosphodiesterase 5 from Mus musculus (Mouse).